The primary structure comprises 178 residues: Large ribosomal subunit protein uL5 (178 aa).

Belongs to the universal ribosomal protein uL5 family. As to quaternary structure, part of the 50S ribosomal subunit; contacts the 5S rRNA and probably tRNA. Forms a bridge to the 30S subunit in the 70S ribosome.

Its function is as follows. This is one of the proteins that bind and probably mediate the attachment of the 5S RNA into the large ribosomal subunit, where it forms part of the central protuberance. In the 70S ribosome it contacts protein S13 of the 30S subunit (bridge B1b), connecting the 2 subunits; this bridge is implicated in subunit movement. May contact the P site tRNA; the 5S rRNA and some of its associated proteins might help stabilize positioning of ribosome-bound tRNAs. This chain is Large ribosomal subunit protein uL5, found in Archaeoglobus fulgidus (strain ATCC 49558 / DSM 4304 / JCM 9628 / NBRC 100126 / VC-16).